The sequence spans 97 residues: Putative membrane protein insertion efficiency factor (97 aa).

The protein belongs to the UPF0161 family.

The protein resides in the cell membrane. Functionally, could be involved in insertion of integral membrane proteins into the membrane. The sequence is that of Putative membrane protein insertion efficiency factor from Lactobacillus helveticus (strain DPC 4571).